A 498-amino-acid chain; its full sequence is MSVCTLLISCAILAAPTLGSLQERRLYEDLMRNYNNLERPVANHSEPVTVHLKVALQQIIDVDEKNQVVYVNAWLDYTWNDYNLVWDKAEYGNITDVRFPAGKIWKPDVLLYNSVDTNFDSTYQTNMIVYSTGLVHWVPPGIFKISCKIDIQWFPFDEQKCFFKFGSWTYDGYKLDLQPATGGFDISEYISNGEWALPLTTVERNEKFYDCCPEPYPDVHFYLHMRRRTLYYGFNLIMPCILTTLMTLLGFTLPPDAGEKITLQITVLLSICFFLSIVSEMSPPTSEAVPLLGIFFTCCMIVVTASTVFTVYVLNLHYRTPETHDMGPWTRNLLLYWIPWILRMKRPGHNLTYASLPSLFSTKPNRHSESLIRNIKDNEHSLSRANSFDADCRLNQYIMTQSVSNGLTSLGSIPSTMISSNGTTTDVSQQATLLILHRIYHELKIVTKRMIEGDKEEQACNNWKFAAMVVDRLCLYVFTIFIIVSTIGIFWSAPYLVA.

An N-terminal signal peptide occupies residues 1–19; that stretch reads MSVCTLLISCAILAAPTLG. Over 20-230 the chain is Extracellular; the sequence is SLQERRLYED…FYLHMRRRTL (211 aa). N-linked (GlcNAc...) asparagine glycans are attached at residues asparagine 43 and asparagine 93. Intrachain disulfides connect cysteine 147–cysteine 161 and cysteine 211–cysteine 212. 3 consecutive transmembrane segments (helical) span residues 231–252, 261–279, and 295–314; these read YYGF…LGFT, ITLQ…SIVS, and FFTC…VYVL. The Cytoplasmic portion of the chain corresponds to 315–472; the sequence is NLHYRTPETH…WKFAAMVVDR (158 aa). A helical transmembrane segment spans residues 473-493; the sequence is LCLYVFTIFIIVSTIGIFWSA.

The protein belongs to the ligand-gated ion channel (TC 1.A.9) family. Acetylcholine receptor (TC 1.A.9.1) subfamily. Expressed in the body wall muscle.

It is found in the postsynaptic cell membrane. The protein localises to the cell membrane. In terms of biological role, after binding acetylcholine, the AChR responds by an extensive change in conformation that affects all subunits and leads to opening of an ion-conducting channel across the plasma membrane. A subunit of the levamisole-insensitive nicotinic receptor. The protein is Acetylcholine receptor subunit alpha-type acr-16 (acr-16) of Caenorhabditis elegans.